Here is a 562-residue protein sequence, read N- to C-terminus: Dihydroxy-acid dehydratase (562 aa).

Cysteine 53 contacts [2Fe-2S] cluster. Aspartate 85 lines the Mg(2+) pocket. A [2Fe-2S] cluster-binding site is contributed by cysteine 126. 2 residues coordinate Mg(2+): aspartate 127 and lysine 128. Lysine 128 is subject to N6-carboxylysine. Position 198 (cysteine 198) interacts with [2Fe-2S] cluster. Residue glutamate 449 coordinates Mg(2+). Residue serine 475 is the Proton acceptor of the active site.

Belongs to the IlvD/Edd family. In terms of assembly, homodimer. It depends on [2Fe-2S] cluster as a cofactor. The cofactor is Mg(2+).

It catalyses the reaction (2R)-2,3-dihydroxy-3-methylbutanoate = 3-methyl-2-oxobutanoate + H2O. The catalysed reaction is (2R,3R)-2,3-dihydroxy-3-methylpentanoate = (S)-3-methyl-2-oxopentanoate + H2O. Its pathway is amino-acid biosynthesis; L-isoleucine biosynthesis; L-isoleucine from 2-oxobutanoate: step 3/4. The protein operates within amino-acid biosynthesis; L-valine biosynthesis; L-valine from pyruvate: step 3/4. In terms of biological role, functions in the biosynthesis of branched-chain amino acids. Catalyzes the dehydration of (2R,3R)-2,3-dihydroxy-3-methylpentanoate (2,3-dihydroxy-3-methylvalerate) into 2-oxo-3-methylpentanoate (2-oxo-3-methylvalerate) and of (2R)-2,3-dihydroxy-3-methylbutanoate (2,3-dihydroxyisovalerate) into 2-oxo-3-methylbutanoate (2-oxoisovalerate), the penultimate precursor to L-isoleucine and L-valine, respectively. This Methylococcus capsulatus (strain ATCC 33009 / NCIMB 11132 / Bath) protein is Dihydroxy-acid dehydratase.